Reading from the N-terminus, the 397-residue chain is Glutamate 5-kinase (397 aa).

The interval 1–28 (MVADLTSDISESQEQETETNSANNNGAV) is disordered. ATP is bound at residue lysine 40. The substrate site is built by serine 80, aspartate 168, and asparagine 180. ATP-binding positions include 200–201 (SD) and 243–249 (SGGMASK). The 78-residue stretch at 306–383 (HGQVYIDQGA…QEIADILGYE (78 aa)) folds into the PUA domain.

This sequence belongs to the glutamate 5-kinase family.

The protein localises to the cytoplasm. It carries out the reaction L-glutamate + ATP = L-glutamyl 5-phosphate + ADP. It participates in amino-acid biosynthesis; L-proline biosynthesis; L-glutamate 5-semialdehyde from L-glutamate: step 1/2. Catalyzes the transfer of a phosphate group to glutamate to form L-glutamate 5-phosphate. The polypeptide is Glutamate 5-kinase (Zymomonas mobilis subsp. mobilis (strain ATCC 31821 / ZM4 / CP4)).